The chain runs to 481 residues: Inosine-5'-monophosphate dehydrogenase (481 aa).

CBS domains are found at residues 92-148 (VIND…SKKV) and 152-209 (MTKM…PEAN). NAD(+) is bound by residues D244 and 293 to 295 (GIG). Residues G295 and G297 each contribute to the K(+) site. Residue S298 participates in IMP binding. C300 contacts K(+). Catalysis depends on C300, which acts as the Thioimidate intermediate. IMP contacts are provided by residues 333-335 (DGG), 356-357 (GS), and 380-384 (YRGMG). R396 functions as the Proton acceptor in the catalytic mechanism. IMP is bound at residue E410. Positions 464, 465, and 466 each coordinate K(+).

This sequence belongs to the IMPDH/GMPR family. In terms of assembly, homotetramer. K(+) serves as cofactor.

The catalysed reaction is IMP + NAD(+) + H2O = XMP + NADH + H(+). It functions in the pathway purine metabolism; XMP biosynthesis via de novo pathway; XMP from IMP: step 1/1. With respect to regulation, mycophenolic acid (MPA) is a non-competitive inhibitor that prevents formation of the closed enzyme conformation by binding to the same site as the amobile flap. In contrast, mizoribine monophosphate (MZP) is a competitive inhibitor that induces the closed conformation. MPA is a potent inhibitor of mammalian IMPDHs but a poor inhibitor of the bacterial enzymes. MZP is a more potent inhibitor of bacterial IMPDH. Catalyzes the conversion of inosine 5'-phosphate (IMP) to xanthosine 5'-phosphate (XMP), the first committed and rate-limiting step in the de novo synthesis of guanine nucleotides, and therefore plays an important role in the regulation of cell growth. The polypeptide is Inosine-5'-monophosphate dehydrogenase (Helicobacter pylori (strain J99 / ATCC 700824) (Campylobacter pylori J99)).